The primary structure comprises 352 residues: Putative hetero-Diels-Alderase (352 aa).

A signal peptide spans 1 to 20 (MRYHLSALVLVFTAFRETLT). 6 N-linked (GlcNAc...) asparagine glycosylation sites follow: asparagine 26, asparagine 41, asparagine 47, asparagine 135, asparagine 211, and asparagine 310.

This sequence belongs to the eupF Diels-Alderase family.

The protein operates within secondary metabolite biosynthesis; terpenoid biosynthesis. Putative hetero-Diels-Alderase; part of the gene cluster that mediates the biosynthesis of eupenifeldin, a bistropolone meroterpenoid that acts as an antitumor agent. The first step of eupenifeldin biosynthesis is the biosynthesis of 3-methylorcinaldehyde performed by the non-reducing polyketide synthase eupA. Oxidative dearomatization of 3-methylorcinaldehyde likely catalyzed by the FAD-dependent monooxygenase eupB is followed by oxidative ring expansion by the 2-oxoglutarate-dependent dioxygenase eupC to provide the first tropolone metabolite, tropolone stipitaldehyde. In parallel, generation of sesquiterpene alpha-humulene from farnesylpyrophosphate (FPP) is catalyzed by the terpene cyclase eupE. The cytochrome P450 monooxygenase eupD then hydroxylates humulene to humulenol. The putative Diels-Alderase eupF probably catalyzes the formation of the tropolone-humulene skeleton by linking humulenol and the polyketide moiety. The short-chain dehydrogenase/reductase eupG and the flavin-dependent monooxygenase eupH are also essential for eupenifeldin biosynthesis and are likely the additional decorating enzymes of the tropolone-humulene skeleton to produce final eupenifeldin or derivatives. The polypeptide is Putative hetero-Diels-Alderase (Phoma sp).